The sequence spans 415 residues: Fructose-like permease IIC component (415 aa).

The Cytoplasmic segment spans residues 1 to 46 (MAIKKRSATVVHGASGAAAAVKNPQASKSSFWGELPQHVMSGISRM). Residues 35 to 415 (LPQHVMSGIS…RKGKLLIESL (381 aa)) form the PTS EIIC type-2 domain. A helical transmembrane segment spans residues 47-67 (VPTLIMGGVILAFSQLIAYSW). Topologically, residues 68–101 (LKIPADIGIMDALNSGKFSGFDLSLLKFAWLSQS) are periplasmic. A helical membrane pass occupies residues 102–122 (FGGVLFGFAIPMFAAFVANSI). Residues 123–126 (GGKL) are Cytoplasmic-facing. Residues 127–147 (AFPAGFIGGLMSTQPTQLLNF) form a helical membrane-spanning segment. The Periplasmic portion of the chain corresponds to 148–157 (DPSTMQWATS). The chain crosses the membrane as a helical span at residues 158–178 (SPVPSTFIGALIISIVAGYLV). Residues 179–197 (KWMNQKIQLPDFLLAFKTT) are Cytoplasmic-facing. Residues 198 to 218 (FLLPILSAIFVMLAMYYVITP) form a helical membrane-spanning segment. Over 219 to 237 (FGGWINGGIRTVLTAAGEK) the chain is Periplasmic. The helical transmembrane segment at 238–258 (GALMYAMGIAAATAIDLGGPI) threads the bilayer. Residues 259 to 276 (NKAAGFVAFSFTTDHVLP) are Cytoplasmic-facing. The chain crosses the membrane as a helical span at residues 277–297 (VTARSIAIVIPPIGLGLATII). Residues 298–318 (DRRLTGKRLFNAQLYPQGKTA) are Periplasmic-facing. Residues 319 to 339 (MFLAFMGISEGAIPFALESPI) traverse the membrane as a helical segment. Residues 340-341 (TA) are Cytoplasmic-facing. Residues 342-362 (IPSYMVGAIVGSTAAVWLGAV) traverse the membrane as a helical segment. Over 363 to 378 (QWFPESAIWAWPLVTN) the chain is Periplasmic. The chain crosses the membrane as a helical span at residues 379 to 399 (LGVYMAGIALGAIITALMVVF). The Cytoplasmic portion of the chain corresponds to 400-415 (LRLMMFRKGKLLIESL).

Its subcellular location is the cell inner membrane. In terms of biological role, the phosphoenolpyruvate-dependent sugar phosphotransferase system (PTS), a major carbohydrate active -transport system, catalyzes the phosphorylation of incoming sugar substrates concomitant with their translocation across the cell membrane. The polypeptide is Fructose-like permease IIC component (fryC) (Escherichia coli O6:H1 (strain CFT073 / ATCC 700928 / UPEC)).